Reading from the N-terminus, the 301-residue chain is GTPase IMAP family member 3 (301 aa).

At 1–279 the chain is on the cytoplasmic side; sequence METLQNVVTG…GKKLEVLHSD (279 aa). One can recognise an AIG1-type G domain in the interval 20–223; sequence SRPLRILLVG…HSNDLFLHAE (204 aa). GTP contacts are provided by residues 29-37, S50, 147-149, and N184; these read GKSGCGKSA and RKE. The segment at 263-301 is required for targeting to the endoplasmic reticulum; the sequence is VLKVLPIGKKLEVLHSDFCWYLVLAILIFFVFFFLLFYV. The chain crosses the membrane as a helical; Anchor for type IV membrane protein span at residues 280 to 300; it reads FCWYLVLAILIFFVFFFLLFY. Position 301 (V301) is a topological domain, lumenal.

The protein belongs to the TRAFAC class TrmE-Era-EngA-EngB-Septin-like GTPase superfamily. AIG1/Toc34/Toc159-like paraseptin GTPase family. IAN subfamily. As to quaternary structure, interacts with BAD, BAK1, BAX, BCL2, BCL2L1/Bcl-xL and BCL2L11/BimEL. The interaction with BAX is increased, when cells initiate apoptosis upon IL2 withdrawal. Expressed in thymus (in thymocytes), spleen (in splenocytes), lymph node and, at lower levels, in lung. Highly expressed in T lymphocytes.

It localises to the endoplasmic reticulum membrane. Its function is as follows. During thymocyte development, may support the positive selection of CD4 and CD8 T cells. May play a role in mitochondrial DNA segregation in hematopoietic tissues. Binds GTP. In Mus musculus (Mouse), this protein is GTPase IMAP family member 3 (Gimap3).